The chain runs to 558 residues: MPTKKHRRKDPESPQEPSEKTKEQLVEGELRKLRQQFRKMVDSRKSFNFRSQQKITNQRKEIKTLQEEQDEITLLLNLIKSSRNLDLNEKNYLELRFLLQTKEDYEALIKSMKLLLAELDEKIVQMEKKIINQRQIFTKIQEANNPRKLQKQIHILETRLNLVTVHFDQMLTTNAKLRKEIEDLRHEKAAYDNVYQHLRRRLLTKKKTMNVAIEQSAQAYEQRLEAMARMAAMKDRQQKDISQYNLEIRELERVYDHETKLKSFLLIKLNDRLEFEEQSKKEEALKAKKYGKKSKGASFESYEVAHLRLLKLTKTGNLNQLIEEFLAKEEKNFARFTYVTELNNDMEMMHKKIERIQNEILRLRSQQKSSHDDSYSILRELEEKLKKTTEEADMYENDYREITKTLEYLKNSVENLFKKINCDATKILVQLGETGKVTDINLPQYFAIIEKKTNDLLVLESYKRLMEMEVAEAEVQPSFLNPFWGGSALLKPAEPIKVIPPVLGADPLSDKLDEVEQPLDHSSLRQMVLSHYATRESRNRDSMPEKGDELKSKKKVTV.

Residues 1 to 26 (MPTKKHRRKDPESPQEPSEKTKEQLV) form a disordered region. Positions 9 to 26 (KDPESPQEPSEKTKEQLV) are enriched in basic and acidic residues. Coiled coils occupy residues 48–289 (NFRS…KAKK) and 339–416 (VTEL…VENL). The disordered stretch occupies residues 531–558 (HYATRESRNRDSMPEKGDELKSKKKVTV). Residues 533–551 (ATRESRNRDSMPEKGDELK) show a composition bias toward basic and acidic residues.

Plays a role in spermiogenesis. Involved in the elongation of flagella and the formation of sperm heads. This Bos taurus (Bovine) protein is Coiled-coil domain-containing protein 63.